We begin with the raw amino-acid sequence, 66 residues long: Large ribosomal subunit protein uL30 (66 aa).

This sequence belongs to the universal ribosomal protein uL30 family. As to quaternary structure, part of the 50S ribosomal subunit.

The sequence is that of Large ribosomal subunit protein uL30 from Chelativorans sp. (strain BNC1).